A 505-amino-acid chain; its full sequence is 2-isopropylmalate synthase (505 aa).

A Pyruvate carboxyltransferase domain is found at 5–267; the sequence is VYIFDTTLRD…YTNIKTEEIY (263 aa). 4 residues coordinate Mn(2+): aspartate 14, histidine 202, histidine 204, and asparagine 238. The segment at 391-505 is regulatory domain; that stretch reads TLEYLHISSG…VNKLIWDSQK (115 aa).

Belongs to the alpha-IPM synthase/homocitrate synthase family. LeuA type 1 subfamily. In terms of assembly, homodimer. Requires Mn(2+) as cofactor.

Its subcellular location is the cytoplasm. The catalysed reaction is 3-methyl-2-oxobutanoate + acetyl-CoA + H2O = (2S)-2-isopropylmalate + CoA + H(+). It participates in amino-acid biosynthesis; L-leucine biosynthesis; L-leucine from 3-methyl-2-oxobutanoate: step 1/4. Catalyzes the condensation of the acetyl group of acetyl-CoA with 3-methyl-2-oxobutanoate (2-ketoisovalerate) to form 3-carboxy-3-hydroxy-4-methylpentanoate (2-isopropylmalate). The protein is 2-isopropylmalate synthase of Pelotomaculum thermopropionicum (strain DSM 13744 / JCM 10971 / SI).